The sequence spans 82 residues: MLEGAKSIGAGAATIASAGAAIGIGNVFSSLIHSVARNPSLAKQSFGYAILGFALTEAIASFAPMMAFLISSVFRSVSRVTI.

2 consecutive transmembrane segments (helical) span residues 8 to 28 (IGAG…GNVF) and 45 to 67 (SFGY…PMMA).

The protein belongs to the ATPase C chain family. In terms of assembly, F-type ATPases have 2 components, CF(1) - the catalytic core - and CF(0) - the membrane proton channel. CF(1) has five subunits: alpha(3), beta(3), gamma(1), delta(1), epsilon(1). CF(0) has three main subunits: a, b and c.

It localises to the mitochondrion membrane. This protein is one of the chains of the nonenzymatic membrane component (F0) of mitochondrial ATPase. In Malus domestica (Apple), this protein is ATP synthase subunit 9, mitochondrial (ATP9).